A 121-amino-acid polypeptide reads, in one-letter code: Large ribosomal subunit protein bL20 (121 aa).

It belongs to the bacterial ribosomal protein bL20 family.

Its function is as follows. Binds directly to 23S ribosomal RNA and is necessary for the in vitro assembly process of the 50S ribosomal subunit. It is not involved in the protein synthesizing functions of that subunit. This chain is Large ribosomal subunit protein bL20 (rplT), found in Chlamydia pneumoniae (Chlamydophila pneumoniae).